We begin with the raw amino-acid sequence, 145 residues long: MRTTFMAKANEVERKWYVVDAEGQTLGRLASEVASILRGKNKPTFTPHVDTGDHVIIINAEKIHLTGNKLNDKIYYRHTNHPGGLKQRTALEMRTNYPVQMLELAIKGMLPKGRLGRQVSKKLNVYAGAEHPHQAQKPEVYELRG.

This sequence belongs to the universal ribosomal protein uL13 family. As to quaternary structure, part of the 50S ribosomal subunit.

In terms of biological role, this protein is one of the early assembly proteins of the 50S ribosomal subunit, although it is not seen to bind rRNA by itself. It is important during the early stages of 50S assembly. The chain is Large ribosomal subunit protein uL13 from Bacillus thuringiensis (strain Al Hakam).